We begin with the raw amino-acid sequence, 407 residues long: Spore germination protein KC (407 aa).

A signal peptide spans 1–20; sequence MVRKCLLAVLMLLSVIVLPG. Cys21 carries N-palmitoyl cysteine lipidation. The S-diacylglycerol cysteine moiety is linked to residue Cys21.

It belongs to the GerABKC lipoprotein family.

Its subcellular location is the cell membrane. Its function is as follows. Involved in the germination response to the combination of glucose, fructose, L-asparagine, and KCl. In Bacillus subtilis (strain 168), this protein is Spore germination protein KC (gerKC).